A 97-amino-acid chain; its full sequence is UPF0235 protein HD_0778 (97 aa).

Belongs to the UPF0235 family.

This is UPF0235 protein HD_0778 from Haemophilus ducreyi (strain 35000HP / ATCC 700724).